A 186-amino-acid chain; its full sequence is Negative modulator of initiation of replication (186 aa).

The tract at residues 93-94 is interaction with DNA; it reads AV.

It belongs to the SeqA family. Homodimer. Polymerizes to form helical filaments.

It is found in the cytoplasm. In terms of biological role, negative regulator of replication initiation, which contributes to regulation of DNA replication and ensures that replication initiation occurs exactly once per chromosome per cell cycle. Binds to pairs of hemimethylated GATC sequences in the oriC region, thus preventing assembly of replication proteins and re-initiation at newly replicated origins. Repression is relieved when the region becomes fully methylated. This is Negative modulator of initiation of replication from Shewanella halifaxensis (strain HAW-EB4).